The following is a 374-amino-acid chain: Layilin (374 aa).

The N-terminal stretch at 1 to 24 (MQPGPALQAVLLAVLLSEPRSSKG) is a signal peptide. The Extracellular portion of the chain corresponds to 25 to 221 (RLLSGQLVCR…TKETFKESRE (197 aa)). A C-type lectin domain is found at 37 to 177 (TRRPCYKVIY…CNMKNNFICK (141 aa)). Cystine bridges form between Cys63–Cys176 and Cys142–Cys168. Asn109 is a glycosylation site (N-linked (GlcNAc...) asparagine). The segment at 184 to 212 (STTPSIRPGGEATEPPTPVLPEETQKEDT) is disordered. Residues 222-242 (AALNLAYILIPSIPLFLLLVV) traverse the membrane as a helical segment. At 243–374 (TSAACWVWIC…SGWVENEIYY (132 aa)) the chain is on the cytoplasmic side. Phosphoserine is present on residues Ser279 and Ser292. Residues 323-367 (DYDNMAVNPSESGFVTLASMESGFVTNDIYEFSPDRMGRSKESGW) are interaction with NF2. Residues 330 to 374 (NPSESGFVTLASMESGFVTNDIYEFSPDRMGRSKESGWVENEIYY) form an interaction with TLN1 region. 5 tandem repeats follow at residues 333 to 337 (ESGFV), 343 to 347 (ESGFV), 349 to 352 (NDIY), 364 to 368 (ESGWV), and 370 to 373 (NEIY). The segment at 333-368 (ESGFVTLASMESGFVTNDIYEFSPDRMGRSKESGWV) is 3 X 5 AA repeats of E-S-G-X-V. Positions 349–373 (NDIYEFSPDRMGRSKESGWVENEIY) are 2 X 4 AA repeats of N-X-I-Y.

Interacts with NF2 and RDX. Interacts with TLN1. As to expression, widely expressed. Abundant in the ovary.

It is found in the membrane. Its function is as follows. Receptor for hyaluronate. The polypeptide is Layilin (LAYN) (Cricetulus griseus (Chinese hamster)).